An 89-amino-acid chain; its full sequence is MEYQYPMDVDWTTEEKIAVISFFQAVEKAYEKGIPKQELLDTYKRFKEIVPSKAEEKTHCAAFEKESGYSPYRTVKTAREAEESTIIRM.

It belongs to the UPF0223 family.

In Bacillus pumilus (strain SAFR-032), this protein is UPF0223 protein BPUM_1362.